We begin with the raw amino-acid sequence, 645 residues long: Serine/threonine-protein kinase BUR1 (645 aa).

The region spanning 55–379 is the Protein kinase domain; sequence YREEEKLGQG…AMKAKKHPFF (325 aa). ATP is bound by residues 61 to 69 and lysine 84; that span reads LGQGTFGEV. Catalysis depends on aspartate 208, which acts as the Proton acceptor. 3 disordered regions span residues 407–428, 442–513, and 533–645; these read EMNE…STDN, ASIP…KYPA, and RYRN…ADYY. 2 stretches are compositionally biased toward polar residues: residues 409-428 and 457-474; these read NESM…STDN and IPAQ…TQNI. The segment covering 477 to 486 has biased composition (pro residues); that stretch reads EPIPTAPLPK. Over residues 578-598 the composition is skewed to polar residues; sequence NRYQNQDYNTSRNTGYNQYSQ.

This sequence belongs to the protein kinase superfamily. CMGC Ser/Thr protein kinase family. CDC2/CDKX subfamily.

It localises to the nucleus. The catalysed reaction is L-seryl-[protein] + ATP = O-phospho-L-seryl-[protein] + ADP + H(+). It catalyses the reaction L-threonyl-[protein] + ATP = O-phospho-L-threonyl-[protein] + ADP + H(+). The enzyme catalyses [DNA-directed RNA polymerase] + ATP = phospho-[DNA-directed RNA polymerase] + ADP + H(+). Functionally, serine/threonine-protein kinase involved in transcription regulation. Phosphorylates the UBC2/RAD6 ubiquitin-conjugating enzyme (E2), leading to monoubiquitination of histone H2B and the silencing of telomeric-associated genes. Also required for histone H3 methylation. Necessary for the recovery from pheromone-induced growth arrest in the cell cycle G1 phase. The protein is Serine/threonine-protein kinase BUR1 (BUR1) of Kluyveromyces lactis (strain ATCC 8585 / CBS 2359 / DSM 70799 / NBRC 1267 / NRRL Y-1140 / WM37) (Yeast).